The sequence spans 385 residues: MWRSLGLALALCLLPYGGAESQGQSPACKQAPPWNIGDQNPMLNSEGTVTVVALLQASUYLCLLQASRLEDLRIKLENQGYFNISYIVVNHQGSPSQLKHAHLKKQVSDHIAVYRQDEHQTDVWTLLNGNKDDFLIYDRCGRLVYHLGLPYSFLTFPYVEEAIKIAYCEKRCGNCSFTSLEDEAFCKNVSSATASKTTEPSEEHNHHKHHDKHGHEHLGSSKPSENQQPGALDVETSLPPSGLHHHHHHHKHKGQHRQGHLESUDMGASEGLQLSLAQRKLURRGCINQLLCKLSEESGAATSSCCCHCRHLIFEKSGSAITUQCAENLPSLCSUQGLFAEEKVIESCQCRSPPAAUHSQHVSPTEASPNUSUNNKTKKUKUNLN.

The signal sequence occupies residues 1 to 19; that stretch reads MWRSLGLALALCLLPYGGA. Residue U59 is a non-standard amino acid, selenocysteine. Residues 59–62 constitute a cross-link (cysteinyl-selenocysteine (Sec-Cys); in isoform Se-P1); the sequence is UYLC. N-linked (GlcNAc...) asparagine glycosylation is found at N83, N174, and N188. 2 cysteine pairs are disulfide-bonded: C168/C186 and C172/C175. A disordered region spans residues 196–262; the sequence is KTTEPSEEHN…KGQHRQGHLE (67 aa). Positions 243–258 are enriched in basic residues; that stretch reads LHHHHHHHKHKGQHRQ. A non-standard amino acid (selenocysteine) is located at residue U264. A Phosphoserine modification is found at S269. 4 non-standard amino acids (selenocysteine) are found at residues U282, U323, U335, and U357. The tract at residues 357–385 is disordered; sequence UHSQHVSPTEASPNUSUNNKTKKUKUNLN. The segment covering 360–369 has biased composition (polar residues); it reads QHVSPTEASP. O-linked (Hex...) threonine; partial glycosylation occurs at T365. Non-standard amino acids (selenocysteine) are located at U371, U373, U380, and U382. Residues 376–385 show a composition bias toward basic residues; the sequence is KTKKUKUNLN.

The protein belongs to the selenoprotein P family. Post-translationally, isoform Se-P1 contains several disulfide bridges and a selenide-sulfide bond between Sec-59 and Cys-62. These bonds are speculated to serve as redox-active pairs. Phosphorylation sites are present in the extracellular medium. Widely expressed, mainly by the liver. Secreted in plasma.

The protein resides in the secreted. Functionally, might be responsible for some of the extracellular antioxidant defense properties of selenium or might be involved in the transport of selenium. May supply selenium to tissues such as brain and testis. The protein is Selenoprotein P of Rattus norvegicus (Rat).